A 156-amino-acid polypeptide reads, in one-letter code: Small ribosomal subunit protein uS7 (156 aa).

This sequence belongs to the universal ribosomal protein uS7 family. In terms of assembly, part of the 30S ribosomal subunit. Contacts proteins S9 and S11.

Functionally, one of the primary rRNA binding proteins, it binds directly to 16S rRNA where it nucleates assembly of the head domain of the 30S subunit. Is located at the subunit interface close to the decoding center, probably blocks exit of the E-site tRNA. The polypeptide is Small ribosomal subunit protein uS7 (Enterobacter sp. (strain 638)).